The following is a 237-amino-acid chain: uncharacterized protein (237 aa).

The protein belongs to the bactofilin family.

This is an uncharacterized protein from Bacillus subtilis (strain 168).